Reading from the N-terminus, the 119-residue chain is Large ribosomal subunit protein uL24 (119 aa).

It belongs to the universal ribosomal protein uL24 family. In terms of assembly, part of the 50S ribosomal subunit.

Functionally, one of two assembly initiator proteins, it binds directly to the 5'-end of the 23S rRNA, where it nucleates assembly of the 50S subunit. Its function is as follows. One of the proteins that surrounds the polypeptide exit tunnel on the outside of the subunit. In Leifsonia xyli subsp. xyli (strain CTCB07), this protein is Large ribosomal subunit protein uL24.